Here is a 226-residue protein sequence, read N- to C-terminus: MTTLERPQPKLSMADKAARIDAICEKARILPVITIAREEDILPLADALAAGGIRTLEVTLRSQHGLKAIQVLREQRPELCVGAGTVLDRSMFAAVEAAGAQFVVTPGITEDILEAGVDSEIPLLPGISTPSEIMMGYALGYRRFKLFPAEISGGVAAIKAFGGPFGDIRFCPTGGVNPANVRNYMALPNVMCVGTGWMLDSSWIKNGDWARIEACSAEAIALLDAN.

E57 (proton acceptor) is an active-site residue. Pyruvate contacts are provided by R61, T85, and K145. The active-site Schiff-base intermediate with substrate is K145.

It belongs to the KHG/KDPG aldolase family. Homotrimer.

It catalyses the reaction 2-dehydro-3-deoxy-6-phospho-D-gluconate = D-glyceraldehyde 3-phosphate + pyruvate. The protein operates within carbohydrate acid metabolism; 2-dehydro-3-deoxy-D-gluconate degradation; D-glyceraldehyde 3-phosphate and pyruvate from 2-dehydro-3-deoxy-D-gluconate: step 2/2. Involved in the degradation of glucose via the Entner-Doudoroff pathway. Catalyzes the reversible, stereospecific retro-aldol cleavage of 2-keto-3-deoxy-6-phosphogluconate (KDPG) to pyruvate and D-glyceraldehyde-3-phosphate. This Pseudomonas putida (Arthrobacter siderocapsulatus) protein is 2-dehydro-3-deoxy-phosphogluconate aldolase.